A 386-amino-acid chain; its full sequence is Succinate--CoA ligase [ADP-forming] subunit beta (386 aa).

The 236-residue stretch at 9–244 folds into the ATP-grasp domain; sequence KEILKQYGVK…LDEEDEKEIE (236 aa). ATP contacts are provided by residues K46, 53-55, E99, C102, and E107; that span reads GRG. N199 and D213 together coordinate Mg(2+). Substrate-binding positions include N264 and 321–323; that span reads GIM.

It belongs to the succinate/malate CoA ligase beta subunit family. As to quaternary structure, heterotetramer of two alpha and two beta subunits. It depends on Mg(2+) as a cofactor.

The enzyme catalyses succinate + ATP + CoA = succinyl-CoA + ADP + phosphate. The catalysed reaction is GTP + succinate + CoA = succinyl-CoA + GDP + phosphate. The protein operates within carbohydrate metabolism; tricarboxylic acid cycle; succinate from succinyl-CoA (ligase route): step 1/1. Its function is as follows. Succinyl-CoA synthetase functions in the citric acid cycle (TCA), coupling the hydrolysis of succinyl-CoA to the synthesis of either ATP or GTP and thus represents the only step of substrate-level phosphorylation in the TCA. The beta subunit provides nucleotide specificity of the enzyme and binds the substrate succinate, while the binding sites for coenzyme A and phosphate are found in the alpha subunit. In Brevibacillus brevis (strain 47 / JCM 6285 / NBRC 100599), this protein is Succinate--CoA ligase [ADP-forming] subunit beta.